The chain runs to 541 residues: Membrane protein insertase YidC (541 aa).

5 consecutive transmembrane segments (helical) span residues 7–27 (LLVI…QLDY), 346–368 (IVQN…LYPL), 416–436 (LGGC…YWTF), 454–474 (LSAQ…MFLL), and 495–515 (PLIF…YWLV).

The protein belongs to the OXA1/ALB3/YidC family. Type 1 subfamily. Interacts with the Sec translocase complex via SecD. Specifically interacts with transmembrane segments of nascent integral membrane proteins during membrane integration.

The protein localises to the cell inner membrane. In terms of biological role, required for the insertion and/or proper folding and/or complex formation of integral membrane proteins into the membrane. Involved in integration of membrane proteins that insert both dependently and independently of the Sec translocase complex, as well as at least some lipoproteins. Aids folding of multispanning membrane proteins. This chain is Membrane protein insertase YidC, found in Pasteurella multocida (strain Pm70).